The chain runs to 464 residues: ATP synthase subunit beta (464 aa).

153-160 contacts ATP; that stretch reads GGAGVGKT.

Belongs to the ATPase alpha/beta chains family. F-type ATPases have 2 components, CF(1) - the catalytic core - and CF(0) - the membrane proton channel. CF(1) has five subunits: alpha(3), beta(3), gamma(1), delta(1), epsilon(1). CF(0) has three main subunits: a(1), b(2) and c(9-12). The alpha and beta chains form an alternating ring which encloses part of the gamma chain. CF(1) is attached to CF(0) by a central stalk formed by the gamma and epsilon chains, while a peripheral stalk is formed by the delta and b chains.

It localises to the cell inner membrane. It carries out the reaction ATP + H2O + 4 H(+)(in) = ADP + phosphate + 5 H(+)(out). Produces ATP from ADP in the presence of a proton gradient across the membrane. The catalytic sites are hosted primarily by the beta subunits. The sequence is that of ATP synthase subunit beta from Burkholderia lata (strain ATCC 17760 / DSM 23089 / LMG 22485 / NCIMB 9086 / R18194 / 383).